We begin with the raw amino-acid sequence, 161 residues long: Large-conductance mechanosensitive channel (161 aa).

The next 2 membrane-spanning stretches (helical) occupy residues 14-34 (VVDM…VNTL) and 85-105 (GLFL…FILV).

This sequence belongs to the MscL family. As to quaternary structure, homopentamer.

It localises to the cell inner membrane. In terms of biological role, channel that opens in response to stretch forces in the membrane lipid bilayer. May participate in the regulation of osmotic pressure changes within the cell. This chain is Large-conductance mechanosensitive channel, found in Chlorobium luteolum (strain DSM 273 / BCRC 81028 / 2530) (Pelodictyon luteolum).